Reading from the N-terminus, the 361-residue chain is Hydroxycarboxylate dehydrogenase B (361 aa).

NAD(+) is bound by residues His48, 122-124 (GRI), 178-182 (LLDYA), His234, Asn270, and 313-316 (GEWE).

Belongs to the LDH2/MDH2 oxidoreductase family.

The catalysed reaction is 2-hydroxyglutarate + NADP(+) = 2-oxoglutarate + NADPH + H(+). It carries out the reaction 2-hydroxyglutarate + NAD(+) = 2-oxoglutarate + NADH + H(+). The enzyme catalyses 3-phenyllactate + NADP(+) = 3-phenylpyruvate + NADPH + H(+). It catalyses the reaction 3-phenyllactate + NAD(+) = 3-phenylpyruvate + NADH + H(+). The catalysed reaction is (2R)-2-hydroxy-3-(4-hydroxyphenyl)propanoate + NAD(+) = 3-(4-hydroxyphenyl)pyruvate + NADH + H(+). It carries out the reaction (2R)-2-hydroxy-3-(4-hydroxyphenyl)propanoate + NADP(+) = 3-(4-hydroxyphenyl)pyruvate + NADPH + H(+). The enzyme catalyses (2R)-3-(3,4-dihydroxyphenyl)lactate + NADP(+) = 3-(3,4-dihydroxyphenyl)pyruvate + NADPH + H(+). It catalyses the reaction (2R)-3-(3,4-dihydroxyphenyl)lactate + NAD(+) = 3-(3,4-dihydroxyphenyl)pyruvate + NADH + H(+). In terms of biological role, catalyzes the NAD(P)H-dependent reduction of 2-oxoglutarate, phenylpyruvate and (4-hydroxyphenyl)pyruvate, leading to the respective 2-hydroxycarboxylate in vitro. Shows a preference for NADPH over NADH as a redox partner. Do not catalyze the reverse reactions. This chain is Hydroxycarboxylate dehydrogenase B, found in Escherichia coli O157:H7.